A 680-amino-acid polypeptide reads, in one-letter code: Methionine--tRNA ligase (680 aa).

A 'HIGH' region motif is present at residues 15–25; sequence PYANGPVHIGH. Positions 147, 150, 160, and 163 each coordinate Zn(2+). The short motif at 332 to 336 is the 'KMSKS' region element; the sequence is KISTS. T335 is an ATP binding site. Residues 579-680 enclose the tRNA-binding domain; sequence DFLKLDIRVG…AEVAAGSQVK (102 aa).

Belongs to the class-I aminoacyl-tRNA synthetase family. MetG type 1 subfamily. In terms of assembly, homodimer. It depends on Zn(2+) as a cofactor.

The protein localises to the cytoplasm. It carries out the reaction tRNA(Met) + L-methionine + ATP = L-methionyl-tRNA(Met) + AMP + diphosphate. Is required not only for elongation of protein synthesis but also for the initiation of all mRNA translation through initiator tRNA(fMet) aminoacylation. This chain is Methionine--tRNA ligase, found in Porphyromonas gingivalis (strain ATCC BAA-308 / W83).